The primary structure comprises 89 residues: Large ribosomal subunit protein bL27 (89 aa).

Residues 1-22 form a disordered region; the sequence is MAHKKGASSSRNGRDSNAQRLG. Residues 7–19 show a composition bias toward polar residues; it reads ASSSRNGRDSNAQ.

It belongs to the bacterial ribosomal protein bL27 family.

The sequence is that of Large ribosomal subunit protein bL27 from Cutibacterium acnes (strain DSM 16379 / KPA171202) (Propionibacterium acnes).